A 149-amino-acid chain; its full sequence is uncharacterized protein (149 aa).

The span at 1-15 (MQRQTGHMEDKKRTG) shows a compositional bias: basic and acidic residues. The segment at 1 to 32 (MQRQTGHMEDKKRTGLESQGTENAFSDGRDGK) is disordered.

This is an uncharacterized protein from Gallus gallus (Chicken).